Here is a 418-residue protein sequence, read N- to C-terminus: Cobalt-zinc-cadmium resistance protein CzcC (418 aa).

Positions Met1–Ala22 are cleaved as a signal peptide.

The protein belongs to the outer membrane factor (OMF) (TC 1.B.17) family.

It is found in the cell outer membrane. Its function is as follows. CzcC protein appears to modify the specificity of the system, perhaps by acting on the CzcB protein. When the CzcC protein is added to CzcA and CzcB, the efflux system gains specificity for cadmium and cobalt. In Cupriavidus metallidurans (strain ATCC 43123 / DSM 2839 / NBRC 102507 / CH34) (Ralstonia metallidurans), this protein is Cobalt-zinc-cadmium resistance protein CzcC (czcC).